The chain runs to 480 residues: Glutamyl-tRNA(Gln) amidotransferase subunit A (480 aa).

Residues Lys-70 and Ser-145 each act as charge relay system in the active site. Ser-169 functions as the Acyl-ester intermediate in the catalytic mechanism.

This sequence belongs to the amidase family. GatA subfamily. Heterotrimer of A, B and C subunits.

The catalysed reaction is L-glutamyl-tRNA(Gln) + L-glutamine + ATP + H2O = L-glutaminyl-tRNA(Gln) + L-glutamate + ADP + phosphate + H(+). Its function is as follows. Allows the formation of correctly charged Gln-tRNA(Gln) through the transamidation of misacylated Glu-tRNA(Gln) in organisms which lack glutaminyl-tRNA synthetase. The reaction takes place in the presence of glutamine and ATP through an activated gamma-phospho-Glu-tRNA(Gln). This chain is Glutamyl-tRNA(Gln) amidotransferase subunit A, found in Lactobacillus delbrueckii subsp. bulgaricus (strain ATCC BAA-365 / Lb-18).